A 669-amino-acid chain; its full sequence is Elongation factor G 2 (669 aa).

The tr-type G domain occupies 1-276; sequence MSIRNIGIMA…SIVDYLPSPF (276 aa). Residues 10–17, 74–78, and 128–131 contribute to the GTP site; these read AHIDAGKT, DTPGH, and NKMD.

The protein belongs to the TRAFAC class translation factor GTPase superfamily. Classic translation factor GTPase family. EF-G/EF-2 subfamily.

The protein localises to the cytoplasm. Its function is as follows. Catalyzes the GTP-dependent ribosomal translocation step during translation elongation. During this step, the ribosome changes from the pre-translocational (PRE) to the post-translocational (POST) state as the newly formed A-site-bound peptidyl-tRNA and P-site-bound deacylated tRNA move to the P and E sites, respectively. Catalyzes the coordinated movement of the two tRNA molecules, the mRNA and conformational changes in the ribosome. The sequence is that of Elongation factor G 2 (fusB) from Borreliella burgdorferi (strain ATCC 35210 / DSM 4680 / CIP 102532 / B31) (Borrelia burgdorferi).